The following is a 126-amino-acid chain: Fluoride-specific ion channel FluC (126 aa).

4 helical membrane passes run 6 to 26 (VLLV…VALA), 32 to 52 (TGFP…IGFI), 68 to 90 (LLLT…ETGG), and 102 to 122 (LYVA…TLLA). Na(+) contacts are provided by Gly76 and Thr79.

Belongs to the fluoride channel Fluc/FEX (TC 1.A.43) family.

Its subcellular location is the cell inner membrane. It catalyses the reaction fluoride(in) = fluoride(out). With respect to regulation, na(+) is not transported, but it plays an essential structural role and its presence is essential for fluoride channel function. Fluoride-specific ion channel. Important for reducing fluoride concentration in the cell, thus reducing its toxicity. This chain is Fluoride-specific ion channel FluC, found in Chlorobaculum tepidum (strain ATCC 49652 / DSM 12025 / NBRC 103806 / TLS) (Chlorobium tepidum).